A 129-amino-acid polypeptide reads, in one-letter code: NADH-quinone oxidoreductase subunit A (129 aa).

A run of 3 helical transmembrane segments spans residues 9 to 29 (FPIGVVLLVAVVLAFTMLGLA), 68 to 88 (LLFIVFDIEAIFLYPWAVLLL), and 97 to 117 (LGWPGFVSMGIFVFTLVAGLV).

The protein belongs to the complex I subunit 3 family. As to quaternary structure, NDH-1 is composed of 14 different subunits. Subunits NuoA, H, J, K, L, M, N constitute the membrane sector of the complex.

Its subcellular location is the cell inner membrane. The enzyme catalyses a quinone + NADH + 5 H(+)(in) = a quinol + NAD(+) + 4 H(+)(out). Its function is as follows. NDH-1 shuttles electrons from NADH, via FMN and iron-sulfur (Fe-S) centers, to quinones in the respiratory chain. The immediate electron acceptor for the enzyme in this species is believed to be ubiquinone. Couples the redox reaction to proton translocation (for every two electrons transferred, four hydrogen ions are translocated across the cytoplasmic membrane), and thus conserves the redox energy in a proton gradient. The chain is NADH-quinone oxidoreductase subunit A from Anaeromyxobacter sp. (strain K).